Reading from the N-terminus, the 132-residue chain is Transcription antitermination protein NusB (132 aa).

It belongs to the NusB family.

Its function is as follows. Involved in transcription antitermination. Required for transcription of ribosomal RNA (rRNA) genes. Binds specifically to the boxA antiterminator sequence of the ribosomal RNA (rrn) operons. This Campylobacter lari (strain RM2100 / D67 / ATCC BAA-1060) protein is Transcription antitermination protein NusB.